The sequence spans 236 residues: Rho-related GTP-binding protein RhoV (236 aa).

The segment at 1–27 (MPPRELSEAEPPPLRAPTPPPRRRSAP) is disordered. The span at 10 to 20 (EPPPLRAPTPP) shows a compositional bias: pro residues. Ser-25 is subject to Phosphoserine. Residues 38–45 (GDGAVGKS), 85–89 (DTAGQ), and 143–146 (TQAD) each bind GTP. Cys-234 carries the S-palmitoyl cysteine lipid modification.

It belongs to the small GTPase superfamily. Rho family. In terms of assembly, interacts with PAK2. Mg(2+) is required as a cofactor. Highly expressed in pancreas, placenta, and fetal brain.

The protein resides in the cell membrane. Its subcellular location is the endosome membrane. Its function is as follows. Plays a role in the control of the actin cytoskeleton via activation of the JNK pathway. The sequence is that of Rho-related GTP-binding protein RhoV from Homo sapiens (Human).